We begin with the raw amino-acid sequence, 194 residues long: Lytic chitin monooxygenase (194 aa).

Positions 1–28 (MKKSLLTIVLAFSFVLGGAALAPTVSEA) are cleaved as a signal peptide. Cu cation contacts are provided by His-29 and His-114. Positions 29–191 (HGYVASPGSR…VNAFYQAIDV (163 aa)) constitute a Chitin-binding type-4 domain.

It depends on Cu(2+) as a cofactor.

It localises to the secreted. The catalysed reaction is [(1-&gt;4)-N-acetyl-beta-D-glucosaminyl]n+m + reduced acceptor + O2 = [(1-&gt;4)-N-acetyl-beta-D-glucosaminyl]m-1-(1-&gt;4)-2-(acetylamino)-2-deoxy-D-glucono-1,5-lactone + [(1-&gt;4)-N-acetyl-beta-D-glucosaminyl]n + acceptor + H2O.. It functions in the pathway glycan degradation; chitin degradation. Functionally, involved in chitin degradation. Catalyzes the oxidative cleavage of glycosidic bonds in both alpha- and beta-chitin via a copper-dependent mechanism, leading to oxidized chitooligosaccharides with a dominance of even-numbered products. Acts synergistically with the chitinase EfChi18A, and combining the two enzymes leads to rapid and complete depolymerization of crystalline chitin, especially with beta-chitin as a substrate. Is likely involved in a chitin degradation pathway that allows E.faecalis V583 to grow on chitin as a carbon source. The sequence is that of Lytic chitin monooxygenase from Enterococcus faecalis (strain ATCC 700802 / V583).